Consider the following 1769-residue polypeptide: U3 small nucleolar RNA-associated protein 10 (1769 aa).

S2 carries the post-translational modification N-acetylserine. Residues 1729-1767 (LVPVIAELLEDDDEEIEREVRTGLVKVVENVLGEPFDRY) form an HEAT repeat.

It belongs to the HEATR1/UTP10 family. In terms of assembly, interacts with snoRNA U3. Interacts with MPP10. Component of the ribosomal small subunit (SSU) processome composed of at least 40 protein subunits and snoRNA U3. In the absence of snoRNA3, forms a complex with other t-UTPs. This complex can associate with pre-18S ribosomal RNAs.

The protein resides in the nucleus. It localises to the nucleolus. The protein localises to the mitochondrion. In terms of biological role, involved in nucleolar processing of pre-18S ribosomal RNA. Required for optimal pre-ribosomal RNA transcription by RNA polymerase I together with a subset of U3 proteins required for transcription (t-UTPs). Involved in ribosome biosynthesis. The protein is U3 small nucleolar RNA-associated protein 10 (UTP10) of Saccharomyces cerevisiae (strain ATCC 204508 / S288c) (Baker's yeast).